The sequence spans 514 residues: uncharacterized protein (514 aa).

The protein to E.coli YjjI.

This is an uncharacterized protein from Haemophilus influenzae (strain ATCC 51907 / DSM 11121 / KW20 / Rd).